Here is a 142-residue protein sequence, read N- to C-terminus: Transcription antitermination protein NusB (142 aa).

Belongs to the NusB family.

In terms of biological role, involved in transcription antitermination. Required for transcription of ribosomal RNA (rRNA) genes. Binds specifically to the boxA antiterminator sequence of the ribosomal RNA (rrn) operons. This chain is Transcription antitermination protein NusB, found in Roseiflexus castenholzii (strain DSM 13941 / HLO8).